An 81-amino-acid polypeptide reads, in one-letter code: Acylphosphatase (81 aa).

The Acylphosphatase-like domain maps to 1–81 (MYIFHGRVQG…VKYNDFQIRY (81 aa)). Catalysis depends on residues Arg14 and Asn32.

It belongs to the acylphosphatase family.

The catalysed reaction is an acyl phosphate + H2O = a carboxylate + phosphate + H(+). The polypeptide is Acylphosphatase (acyP) (Picrophilus torridus (strain ATCC 700027 / DSM 9790 / JCM 10055 / NBRC 100828 / KAW 2/3)).